The sequence spans 129 residues: NADH-ubiquinone oxidoreductase chain 3 (129 aa).

The next 3 membrane-spanning stretches (helical) occupy residues 4 to 24, 48 to 68, and 82 to 102; these read FYMY…WLLA, AAFS…DLEI, and GLYG…AFIL.

It belongs to the complex I subunit 3 family.

The protein localises to the mitochondrion membrane. It carries out the reaction a ubiquinone + NADH + 5 H(+)(in) = a ubiquinol + NAD(+) + 4 H(+)(out). Functionally, core subunit of the mitochondrial membrane respiratory chain NADH dehydrogenase (Complex I) that is believed to belong to the minimal assembly required for catalysis. Complex I functions in the transfer of electrons from NADH to the respiratory chain. The immediate electron acceptor for the enzyme is believed to be ubiquinone. The protein is NADH-ubiquinone oxidoreductase chain 3 (NAD3) of Candida albicans (strain SC5314 / ATCC MYA-2876) (Yeast).